The chain runs to 202 residues: U-Kazal-Dg21.2 (202 aa).

The first 20 residues, 1–20 (MKYFLWSAVTIFAIVNVVGA), serve as a signal peptide directing secretion. The propeptide occupies 21-87 (KNSDFDPRCL…SFCQVEEDFD (67 aa)). 3 consecutive Kazal-like domains span residues 23–77 (SDFD…KTLM), 85–140 (DFDS…ICRN), and 148–202 (IDPK…KGEC). 5 disulfides stabilise this stretch: cysteine 29–cysteine 62, cysteine 33–cysteine 55, cysteine 91–cysteine 124, cysteine 95–cysteine 117, and cysteine 103–cysteine 138. Asparagine 140 carries an N-linked (GlcNAc...) asparagine glycan. The propeptide occupies 142–202 (SFKSELIDPK…NWTLIRKGEC (61 aa)). 3 cysteine pairs are disulfide-bonded: cysteine 154-cysteine 187, cysteine 158-cysteine 180, and cysteine 166-cysteine 202. N-linked (GlcNAc...) asparagine glycosylation is present at asparagine 193.

In terms of tissue distribution, expressed by the venom gland.

The protein localises to the secreted. In terms of biological role, may act as a serine protease inhibitor, since it possess the kazal serine protease inhibitor signature. The recombinant peptide does not produce toxic effects on insects. The chain is U-Kazal-Dg21.2 from Dolopus genitalis (Giant Australian assassin fly).